The following is a 245-amino-acid chain: 5'-nucleotidase SurE (245 aa).

A divalent metal cation is bound by residues D8, D9, S39, and N91.

This sequence belongs to the SurE nucleotidase family. Requires a divalent metal cation as cofactor.

It localises to the cytoplasm. The catalysed reaction is a ribonucleoside 5'-phosphate + H2O = a ribonucleoside + phosphate. In terms of biological role, nucleotidase that shows phosphatase activity on nucleoside 5'-monophosphates. The protein is 5'-nucleotidase SurE of Psychromonas ingrahamii (strain DSM 17664 / CCUG 51855 / 37).